The chain runs to 228 residues: 2,3-bisphosphoglycerate-dependent phosphoglycerate mutase (228 aa).

Substrate-binding positions include 8 to 15, 21 to 22, arginine 60, 87 to 90, lysine 98, 114 to 115, and 180 to 181; these read RHGQSQWN, TG, ERHY, RR, and GN. Residue histidine 9 is the Tele-phosphohistidine intermediate of the active site. The Proton donor/acceptor role is filled by glutamate 87.

This sequence belongs to the phosphoglycerate mutase family. BPG-dependent PGAM subfamily. In terms of assembly, homodimer.

The enzyme catalyses (2R)-2-phosphoglycerate = (2R)-3-phosphoglycerate. Its pathway is carbohydrate degradation; glycolysis; pyruvate from D-glyceraldehyde 3-phosphate: step 3/5. Catalyzes the interconversion of 2-phosphoglycerate and 3-phosphoglycerate. This chain is 2,3-bisphosphoglycerate-dependent phosphoglycerate mutase, found in Sphingopyxis alaskensis (strain DSM 13593 / LMG 18877 / RB2256) (Sphingomonas alaskensis).